We begin with the raw amino-acid sequence, 130 residues long: YopE regulator (130 aa).

Positive regulator of YopE. This is YopE regulator (yerA) from Yersinia enterocolitica serotype O:8 / biotype 1B (strain NCTC 13174 / 8081).